A 90-amino-acid polypeptide reads, in one-letter code: Small ribosomal subunit protein bS16 (90 aa).

The protein belongs to the bacterial ribosomal protein bS16 family.

This chain is Small ribosomal subunit protein bS16, found in Geobacillus thermodenitrificans (strain NG80-2).